Here is a 101-residue protein sequence, read N- to C-terminus: Putative fatty acid-binding protein 5-like protein 3 (101 aa).

It belongs to the calycin superfamily. Fatty-acid binding protein (FABP) family.

Functionally, high specificity for fatty acids. This chain is Putative fatty acid-binding protein 5-like protein 3 (FABP5P3), found in Homo sapiens (Human).